A 430-amino-acid polypeptide reads, in one-letter code: Transcription factor E2F1 (430 aa).

Positions 62-103 are cyclin A:CDK2 binding; the sequence is ATPQAPRPAPSAPRPALGRPPVKRRLDLETDHQYLAGSSGPF. The interval 84–186 is interaction with BIRC2/c-IAP1; it reads KRRLDLETDH…KKSKNHIQWL (103 aa). The disordered stretch occupies residues 95-123; it reads YLAGSSGPFRGRGRHPGKGVKSPGEKSRY. The DNA-binding element occupies 105–189; it reads GRGRHPGKGV…KNHIQWLGSH (85 aa). 3 positions are modified to N6-acetyllysine: K112, K115, and K120. The interval 148–169 is leucine-zipper; it reads LNWAAEVLKVQKRRIYDITNVL. Positions 153–189 match the DEF box motif; sequence EVLKVQKRRIYDITNVLEGIQLIAKKSKNHIQWLGSH. K180 is subject to N6-methyllysine; by SETD7. The required for interaction with TRIM28 stretch occupies residues 187–375; it reads GSHTMVGIGK…QLSPLVAADS (189 aa). The dimerization stretch occupies residues 190–279; that stretch reads TMVGIGKRLE…AVDSSETFQI (90 aa). The segment at 294 to 340 is disordered; sequence PEESADGISPGKTSCQETSSGEDRTADSGPAGPPPSPPSTSPALDPS. Residues 324–333 show a composition bias toward pro residues; the sequence is AGPPPSPPST. Residues 361-430 form a transactivation region; sequence PMEEDQLSPL…DFGDLTPLDF (70 aa). S368 and S396 each carry phosphoserine. The interval 402-419 is RB1 binding; sequence LDYHFGLEEGEGIRDLFD. At T426 the chain carries Phosphothreonine.

It belongs to the E2F/DP family. As to quaternary structure, component of the DRTF1/E2F transcription factor complex. Forms heterodimers with DP family members. The E2F1 complex binds specifically hypophosphorylated RB1, the interaction represses E2F1-driven transcription. During the cell cycle, RB1 becomes phosphorylated in mid-to-late G1 phase, detaches from the DRTF1/E2F complex, rendering E2F transcriptionally active. Interacts with TRRAP, which probably mediates its interaction with histone acetyltransferase complexes, leading to transcription activation. Binds TOPBP1 and EAPP. Interacts with ARID3A. Interacts with TRIM28; the interaction inhibits E2F1 acetylation through recruiting HDAC1 and represses its transcriptional activity. Interaction with KAT2B; the interaction acetylates E2F1 enhancing its DNA-binding and transcriptional activity. Interacts with BIRC2/c-IAP1 (via BIR domains). The complex TFDP1:E2F1 interacts with CEBPA; the interaction prevents CEBPA binding to target genes promoters and represses its transcriptional activity. Interacts with RRP1B. Interacts with HCFC1. Interacts with KMT2E; the interaction is probably indirect and is mediated via HCFC1. Interacts with DCAF5 and L3MBTL3; the interaction requires methylation at Lys-180 and is necessary to target E2F1 for ubiquitination by the CRL4-DCAF5 E3 ubiquitin ligase complex. In terms of processing, phosphorylated by CDK2 and cyclin A-CDK2 in the S-phase. Phosphorylation by CHEK2 stabilizes E2F1 upon DNA damage and regulates its effect on transcription and apoptosis. Phosphorylation at Ser-396 by GSK3B promotes interaction with USP11, leading to its deubiquitination and stabilization. Ubiquitinated via 'Lys-63'-linked ubiquitin, leading to its degradation. Deubiquitinated by USP11 following phosphorylation by GSK3B, promoting its stability. Post-translationally, acetylation stimulates DNA-binding. Enhanced under stress conditions such as DNA damage and inhibited by retinoblastoma protein RB1. Regulated by KAP1/TRIM28 which recruits HDAC1 to E2F1 resulting in deacetylation. Acetylated by P/CAF/KAT2B. In terms of processing, methylation at Lys-180 by SETD7 promotes E2F1 ubiquitin-dependent proteasomal degradation.

The protein localises to the nucleus. With respect to regulation, BIRC2/c-IAP1 stimulates its transcriptional activity. Functionally, transcription activator that binds DNA cooperatively with DP proteins through the E2 recognition site, 5'-TTTC[CG]CGC-3' found in the promoter region of a number of genes whose products are involved in cell cycle regulation or in DNA replication. The DRTF1/E2F complex functions in the control of cell-cycle progression from G1 to S phase. E2F1 binds preferentially RB1 in a cell-cycle dependent manner. It can mediate both cell proliferation and TP53/p53-dependent apoptosis. Blocks adipocyte differentiation by binding to specific promoters repressing CEBPA binding to its target gene promoters. Directly activates transcription of PEG10. Positively regulates transcription of RRP1B. In Mus musculus (Mouse), this protein is Transcription factor E2F1.